The chain runs to 128 residues: Small ribosomal subunit protein eS8 (128 aa).

This sequence belongs to the eukaryotic ribosomal protein eS8 family. Part of the 30S ribosomal subunit.

The chain is Small ribosomal subunit protein eS8 from Methanococcus vannielii (strain ATCC 35089 / DSM 1224 / JCM 13029 / OCM 148 / SB).